The chain runs to 352 residues: MSATASVATRHDWSLAEVRALFEQPFNDLLFQAQTVHRAYFDPNRVQVSTLLSIKTGACPEDCKYCPQSGHYNTGLDKEKLMEVQKVLEAAAEAKAIGSTRFCMGAAWKHPSAKDMPYVLEMVKGVKKLGLETCMTLGRLTQEQTQALADAGLDYYNHNLDTSPEFYGNIITTRTYSERLQTLAYVREAGMKICSGGILGMGESVDDRAGLLIQLANLPEHPESVPINMLVKVKGTPLAEEKDVDPFDFIRTLAVARIMMPKSHVRLSAGREQMNEQMQALAFMAGANSIFYGEKLLTTKNPQAEKDMQLFARLGIKPEEREEHADEVHQAAIEQALVEQRESKLFYNAASA.

A Radical SAM core domain is found at 44–262 (NRVQVSTLLS…LAVARIMMPK (219 aa)). Cysteine 59, cysteine 63, and cysteine 66 together coordinate [4Fe-4S] cluster. [2Fe-2S] cluster is bound by residues cysteine 103, cysteine 134, cysteine 194, and arginine 266.

It belongs to the radical SAM superfamily. Biotin synthase family. As to quaternary structure, homodimer. [4Fe-4S] cluster is required as a cofactor. [2Fe-2S] cluster serves as cofactor.

The catalysed reaction is (4R,5S)-dethiobiotin + (sulfur carrier)-SH + 2 reduced [2Fe-2S]-[ferredoxin] + 2 S-adenosyl-L-methionine = (sulfur carrier)-H + biotin + 2 5'-deoxyadenosine + 2 L-methionine + 2 oxidized [2Fe-2S]-[ferredoxin]. It functions in the pathway cofactor biosynthesis; biotin biosynthesis; biotin from 7,8-diaminononanoate: step 2/2. Its function is as follows. Catalyzes the conversion of dethiobiotin (DTB) to biotin by the insertion of a sulfur atom into dethiobiotin via a radical-based mechanism. This Pseudomonas aeruginosa (strain UCBPP-PA14) protein is Biotin synthase.